The following is a 147-amino-acid chain: Hemoglobin subunit beta-1 (147 aa).

Valine 2 is modified (N-acetylvaline). In terms of domain architecture, Globin spans 3 to 147 (HLTDAEKAAV…VATALAHKYH (145 aa)). An N6-succinyllysine modification is found at lysine 18. Serine 21, serine 45, and serine 51 each carry phosphoserine. Residue lysine 60 is modified to N6-succinyllysine. Histidine 64 and histidine 93 together coordinate heme b. Arginine 105 carries the post-translational modification Asymmetric dimethylarginine. Position 124 is a phosphothreonine (threonine 124).

The protein belongs to the globin family. As to quaternary structure, heterotetramer of two alpha chains and two beta chains. Red blood cells.

In terms of biological role, involved in oxygen transport from the lung to the various peripheral tissues. This Mus musculus (Mouse) protein is Hemoglobin subunit beta-1 (Hbb-b1).